The sequence spans 49 residues: Large ribosomal subunit protein bL33 (49 aa).

Belongs to the bacterial ribosomal protein bL33 family.

This chain is Large ribosomal subunit protein bL33, found in Finegoldia magna (strain ATCC 29328 / DSM 20472 / WAL 2508) (Peptostreptococcus magnus).